A 238-amino-acid polypeptide reads, in one-letter code: Ribosomal RNA small subunit methyltransferase G (238 aa).

Residues Gly77, Phe82, 128–129, and Arg147 contribute to the S-adenosyl-L-methionine site; that span reads AE. The segment at 216-238 is disordered; sequence RKERSTPKKYPRKPGTPNKQPLS.

Belongs to the methyltransferase superfamily. RNA methyltransferase RsmG family.

It is found in the cytoplasm. In terms of biological role, specifically methylates the N7 position of guanine in position 535 of 16S rRNA. This is Ribosomal RNA small subunit methyltransferase G from Halalkalibacterium halodurans (strain ATCC BAA-125 / DSM 18197 / FERM 7344 / JCM 9153 / C-125) (Bacillus halodurans).